Consider the following 324-residue polypeptide: Cytochrome c biogenesis protein CcsA (324 aa).

Transmembrane regions (helical) follow at residues Ile17–Leu37, Gly44–Gly64, Leu68–Ile88, Tyr99–Leu119, Met145–Ile165, Val230–Asn250, Thr264–His278, and Ala291–Leu311.

Belongs to the CcmF/CycK/Ccl1/NrfE/CcsA family. In terms of assembly, may interact with Ccs1.

It is found in the plastid. The protein localises to the chloroplast thylakoid membrane. Its function is as follows. Required during biogenesis of c-type cytochromes (cytochrome c6 and cytochrome f) at the step of heme attachment. This chain is Cytochrome c biogenesis protein CcsA, found in Lemna minor (Common duckweed).